The primary structure comprises 220 residues: Small ribosomal subunit protein uS3 (220 aa).

The 70-residue stretch at 24–93 folds into the KH type-2 domain; sequence IKEFLEYRLS…NPQIDVIDVS (70 aa).

It belongs to the universal ribosomal protein uS3 family. In terms of assembly, part of the 30S ribosomal subunit.

Binds the lower part of the 30S subunit head. The chain is Small ribosomal subunit protein uS3 from Pyrobaculum arsenaticum (strain DSM 13514 / JCM 11321 / PZ6).